Reading from the N-terminus, the 1498-residue chain is Rap guanine nucleotide exchange factor 2 (1498 aa).

Disordered stretches follow at residues 40 to 59 and 68 to 101; these read HVSSSHSGCSITSDSGSSSL and SEAGDMDLSGLPETAVDSEDDDDEEDIERASDPL. A compositionally biased stretch (acidic residues) spans 83–94; the sequence is VDSEDDDDEEDI. 135 to 252 lines the a nucleoside 3',5'-cyclic phosphate pocket; sequence AFANMTMSVR…QKVEEEGEIV (118 aa). In terms of domain architecture, N-terminal Ras-GEF spans 267-380; sequence KGHIVIKGTS…RLLNIACAAK (114 aa). A PDZ domain is found at 385–468; that stretch reads LMTLTKPSRE…LSITVKTNLF (84 aa). Phosphoserine is present on Ser501. In terms of domain architecture, Ras-associating spans 606 to 692; the sequence is PDQVLRVFKA…GRYYLKNNME (87 aa). Phosphothreonine is present on Thr644. Residues 717 to 944 enclose the Ras-GEF domain; the sequence is STVEVATQLS…SQGSTNATVL (228 aa). 11 positions are modified to phosphoserine: Ser806, Ser930, Ser933, Ser1022, Ser1079, Ser1088, Ser1094, Ser1115, Ser1119, Ser1158, and Ser1175. The interval 1002–1048 is disordered; that stretch reads PATNTLPKNPGDKKPVKSETSPVAPRAGSQQKAQAQPPPPQPQPQHK. Residues 1094–1159 are disordered; that stretch reads SLERHKKQAE…RSSIVSNSSF (66 aa). Low complexity-rich tracts occupy residues 1110–1124 and 1140–1159; these read SSQLSSPPTSPQSSP and SDSGHSEISSRSSIVSNSSF. 3 disordered regions span residues 1224–1257, 1304–1371, and 1392–1498; these read STEELSQDQGDRASLDAADSGRGSWTSCSSGSHD, TKYN…TKPV, and EGRY…VSAV. Polar residues-rich tracts occupy residues 1246–1257 and 1306–1330; these read GSWTSCSSGSHD and YNRQNQSRESLEQAQSRASWASSTG. Low complexity predominate over residues 1354–1365; it reads EAESSSVTSVTT. Residues 1487 to 1498 show a composition bias toward acidic residues; sequence TEEDEDEQVSAV.

This sequence belongs to the RAPGEF2 family. Found in a complex, at least composed of KIDINS220, MAGI2, NTRK1 and RAPGEF2; the complex is mainly formed at late endosomes in a neuronal growth factor (NGF)-dependent manner. Interacts (via C-terminal domain) with NEDD4 (via WW domains); this interaction leads to ubiquitination and degradation via the proteasome pathway in a cAMP-independent manner. Interacts with MAGI1 (via PDZ domain). Interacts with ADRB1 (via C-terminal PDZ motif); the interaction is direct. Interacts (via Ras-associating domain) with RAP1A (via GTP-bound active form). Interacts weakly with HRAS (via GDP- and GTP-bound forms). Interacts (via C-terminal domain) with MAGI2 (via PDZ and WW domains). Interacts with CDH1, CTNNB1 and TJP1. Ubiquitinated by NEDD4, leading to proteasomal degradation. Post-translationally, phosphorylation by PLK2 promotes its activity.

It localises to the cell junction. The protein resides in the cytoplasm. It is found in the perinuclear region. The protein localises to the cell membrane. Its subcellular location is the late endosome. In terms of biological role, functions as a guanine nucleotide exchange factor (GEF), which activates Rap and Ras family of small GTPases by exchanging bound GDP for free GTP in a cAMP-dependent manner. Serves as a link between cell surface receptors and Rap/Ras GTPases in intracellular signaling cascades. Also acts as an effector for Rap1 by direct association with Rap1-GTP thereby leading to the amplification of Rap1-mediated signaling. Shows weak activity on HRAS. It is controversial whether RAPGEF2 binds cAMP and cGMP or not. Its binding to ligand-activated beta-1 adrenergic receptor ADRB1 leads to the Ras activation through the G(s)-alpha signaling pathway. Involved in the cAMP-induced Ras and Erk1/2 signaling pathway that leads to sustained inhibition of long term melanogenesis by reducing dendrite extension and melanin synthesis. Also provides inhibitory signals for cell proliferation of melanoma cells and promotes their apoptosis in a cAMP-independent nanner. Regulates cAMP-induced neuritogenesis by mediating the Rap1/B-Raf/ERK signaling through a pathway that is independent on both PKA and RAPGEF3/RAPGEF4. Involved in neuron migration and in the formation of the major forebrain fiber connections forming the corpus callosum, the anterior commissure and the hippocampal commissure during brain development. Involved in neuronal growth factor (NGF)-induced sustained activation of Rap1 at late endosomes and in brain-derived neurotrophic factor (BDNF)-induced axon outgrowth of hippocampal neurons. Plays a role in the regulation of embryonic blood vessel formation and in the establishment of basal junction integrity and endothelial barrier function. May be involved in the regulation of the vascular endothelial growth factor receptor KDR and cadherin CDH5 expression at allantois endothelial cell-cell junctions. The protein is Rap guanine nucleotide exchange factor 2 (RAPGEF2) of Canis lupus familiaris (Dog).